We begin with the raw amino-acid sequence, 296 residues long: Diguanylate cyclase DgcS (296 aa).

In terms of domain architecture, GGDEF spans 165 to 293 (GSVSLIVLDL…GRNCYKLSPT (129 aa)). Mg(2+)-binding residues include D173, L174, and D216. D216 is an active-site residue.

It depends on Mg(2+) as a cofactor.

It catalyses the reaction 2 GTP = 3',3'-c-di-GMP + 2 diphosphate. Its function is as follows. Catalyzes the synthesis of cyclic-di-GMP (c-di-GMP) via the condensation of 2 GTP molecules. May be involved in the regulation of formation of solid surface-associated biofilms and pellicles according to environmental conditions. In Shewanella oneidensis (strain ATCC 700550 / JCM 31522 / CIP 106686 / LMG 19005 / NCIMB 14063 / MR-1), this protein is Diguanylate cyclase DgcS.